Here is a 575-residue protein sequence, read N- to C-terminus: Proline--tRNA ligase (575 aa).

The protein belongs to the class-II aminoacyl-tRNA synthetase family. ProS type 1 subfamily. In terms of assembly, homodimer.

The protein localises to the cytoplasm. It carries out the reaction tRNA(Pro) + L-proline + ATP = L-prolyl-tRNA(Pro) + AMP + diphosphate. Catalyzes the attachment of proline to tRNA(Pro) in a two-step reaction: proline is first activated by ATP to form Pro-AMP and then transferred to the acceptor end of tRNA(Pro). As ProRS can inadvertently accommodate and process non-cognate amino acids such as alanine and cysteine, to avoid such errors it has two additional distinct editing activities against alanine. One activity is designated as 'pretransfer' editing and involves the tRNA(Pro)-independent hydrolysis of activated Ala-AMP. The other activity is designated 'posttransfer' editing and involves deacylation of mischarged Ala-tRNA(Pro). The misacylated Cys-tRNA(Pro) is not edited by ProRS. This is Proline--tRNA ligase from Saccharophagus degradans (strain 2-40 / ATCC 43961 / DSM 17024).